The chain runs to 138 residues: Small ribosomal subunit protein uS11 (138 aa).

The protein belongs to the universal ribosomal protein uS11 family. As to quaternary structure, part of the 30S ribosomal subunit.

Located on the platform of the 30S subunit. The sequence is that of Small ribosomal subunit protein uS11 from Pyrobaculum arsenaticum (strain DSM 13514 / JCM 11321 / PZ6).